We begin with the raw amino-acid sequence, 153 residues long: Peptidyl-prolyl cis-trans isomerase FKBP15-1 (153 aa).

Residues 1–25 (MMSSASAMKAVGFLLLLTILTLAYA) form the signal peptide. Residues 52 to 140 (GDKIKVHYRG…IFDTELVAVN (89 aa)) form the PPIase FKBP-type domain. The Prevents secretion from ER signature appears at 150–153 (KNEL).

Belongs to the FKBP-type PPIase family.

It is found in the endoplasmic reticulum lumen. It carries out the reaction [protein]-peptidylproline (omega=180) = [protein]-peptidylproline (omega=0). Functionally, PPIases accelerate the folding of proteins. It catalyzes the cis-trans isomerization of proline imidic peptide bonds in oligopeptides. This Arabidopsis thaliana (Mouse-ear cress) protein is Peptidyl-prolyl cis-trans isomerase FKBP15-1 (FKBP15-1).